A 312-amino-acid polypeptide reads, in one-letter code: Isethionate sulfite-lyase activating enzyme (312 aa).

Residues His22–Glu309 enclose the Radical SAM core domain. Positions 36, 40, 43, 62, 65, 68, 72, 92, 95, 100, and 104 each coordinate [4Fe-4S] cluster. Residue Trp42 to Ser44 coordinates S-adenosyl-L-methionine. 2 4Fe-4S ferredoxin-type domains span residues Pro53–Asp82 and Gly83–Asn115. S-adenosyl-L-methionine is bound by residues Gly144, Asp193 to Lys195, and His267.

Belongs to the organic radical-activating enzymes family. Monomer. Requires [4Fe-4S] cluster as cofactor.

The catalysed reaction is glycyl-[protein] + reduced [flavodoxin] + S-adenosyl-L-methionine = glycin-2-yl radical-[protein] + semiquinone [flavodoxin] + 5'-deoxyadenosine + L-methionine + H(+). The protein operates within organosulfur degradation; alkanesulfonate degradation. Involved in an anaerobic respiration pathway that converts the sulfonate taurine (2-aminoethanesulfonate) to ammonia, acetate and sulfide. Catalyzes activation of the isethionate sulfite-lyase IslA under anaerobic conditions by generation of an organic free radical on a glycine residue, via a homolytic cleavage of S-adenosyl-L-methionine (SAM). This Bilophila wadsworthia (strain 3_1_6) protein is Isethionate sulfite-lyase activating enzyme.